The primary structure comprises 350 residues: Hydroxymethylglutaryl-CoA synthase (350 aa).

The (3S)-3-hydroxy-3-methylglutaryl-CoA site is built by aspartate 33 and valine 34. The active-site Proton donor/acceptor is glutamate 85. Cysteine 117 and threonine 158 together coordinate (3S)-3-hydroxy-3-methylglutaryl-CoA. The Acyl-thioester intermediate role is filled by cysteine 117. CoA is bound at residue arginine 204. (3S)-3-hydroxy-3-methylglutaryl-CoA-binding residues include threonine 206 and histidine 239. Histidine 239 (proton donor/acceptor) is an active-site residue. Residue lysine 244 participates in CoA binding. Positions 248, 271, and 301 each coordinate (3S)-3-hydroxy-3-methylglutaryl-CoA.

It belongs to the thiolase-like superfamily. Archaeal HMG-CoA synthase family. As to quaternary structure, interacts with acetoacetyl-CoA thiolase that catalyzes the precedent step in the pathway and with a DUF35 protein. The acetoacetyl-CoA thiolase/HMG-CoA synthase complex channels the intermediate via a fused CoA-binding site, which allows for efficient coupling of the endergonic thiolase reaction with the exergonic HMGCS reaction.

The enzyme catalyses acetoacetyl-CoA + acetyl-CoA + H2O = (3S)-3-hydroxy-3-methylglutaryl-CoA + CoA + H(+). The protein operates within metabolic intermediate biosynthesis; (R)-mevalonate biosynthesis; (R)-mevalonate from acetyl-CoA: step 2/3. Its function is as follows. Catalyzes the condensation of acetyl-CoA with acetoacetyl-CoA to form 3-hydroxy-3-methylglutaryl-CoA (HMG-CoA). Functions in the mevalonate (MVA) pathway leading to isopentenyl diphosphate (IPP), a key precursor for the biosynthesis of isoprenoid compounds that are building blocks of archaeal membrane lipids. The protein is Hydroxymethylglutaryl-CoA synthase of Methanopyrus kandleri (strain AV19 / DSM 6324 / JCM 9639 / NBRC 100938).